The chain runs to 1284 residues: ATP-dependent helicase fft2 (1284 aa).

Polar residues-rich tracts occupy residues 1–10 and 20–57; these read MLPYNSNYLS and ENPQ…AMYG. Disordered regions lie at residues 1–57, 185–252, 317–339, 353–388, and 446–465; these read MLPY…AMYG, AQPP…LPPV, KQSP…QSQK, STQA…EEPE, and PDDV…KNPM. Residues 201–241 show a composition bias toward low complexity; sequence RSNSRSSARSTARSAPRSTQRSRSSSANPVTTPPVNNTLLT. 2 stretches are compositionally biased toward polar residues: residues 320-339 and 353-372; these read PVAS…QSQK and STQA…ASKK. Position 323 is a phosphoserine (serine 323). The span at 376–388 shows a compositional bias: acidic residues; it reads EEDEFYDSEEEPE. At serine 383 the chain carries Phosphoserine. The region spanning 562 to 730 is the Helicase ATP-binding domain; it reads HLLYQQKLSG…VSLLAFILPN (169 aa). 575 to 582 provides a ligand contact to ATP; the sequence is DEMGLGKT. The DEGH box signature appears at 681–684; the sequence is DEGH. Positions 816 to 839 are disordered; sequence QQLRRDDKRNKRSKNDEESDGKSL. The segment covering 818-831 has biased composition (basic and acidic residues); it reads LRRDDKRNKRSKND. In terms of domain architecture, Helicase C-terminal spans 928–1079; that stretch reads VLKELLPKMK…SLSSDGKDRE (152 aa). Residues 1088-1284 form a disordered region; that stretch reads DMLDEENNGN…SEVDNNAAKD (197 aa). The span at 1095 to 1107 shows a compositional bias: polar residues; the sequence is NGNNTKPEITGNE. The segment covering 1143-1177 has biased composition (basic and acidic residues); sequence EKTDLADGDEKANIKTEMKSETVEGDNKELRETMK. Positions 1180-1194 are enriched in polar residues; the sequence is NVQTDSNAAVPSSKS. 2 stretches are compositionally biased toward basic and acidic residues: residues 1243–1256 and 1266–1284; these read QLEK…KKPD and EEEK…AAKD.

It belongs to the SNF2/RAD54 helicase family.

It localises to the cytoplasm. The protein localises to the nucleus. It carries out the reaction ATP + H2O = ADP + phosphate + H(+). Its function is as follows. DNA helicase that possesses intrinsic ATP-dependent nucleosome-remodeling activity and is required for heterochromatin organization. The protein is ATP-dependent helicase fft2 (fft2) of Schizosaccharomyces pombe (strain 972 / ATCC 24843) (Fission yeast).